The sequence spans 208 residues: Small ribosomal subunit protein uS4 (208 aa).

The interval Tyr-28–Ser-48 is disordered. Residues Met-95 to Gly-160 enclose the S4 RNA-binding domain.

This sequence belongs to the universal ribosomal protein uS4 family. As to quaternary structure, part of the 30S ribosomal subunit. Contacts protein S5. The interaction surface between S4 and S5 is involved in control of translational fidelity.

Its function is as follows. One of the primary rRNA binding proteins, it binds directly to 16S rRNA where it nucleates assembly of the body of the 30S subunit. With S5 and S12 plays an important role in translational accuracy. This chain is Small ribosomal subunit protein uS4, found in Arthrobacter sp. (strain FB24).